Here is a 145-residue protein sequence, read N- to C-terminus: Bacilliredoxin SERP1075 (145 aa).

Belongs to the bacilliredoxin family.

This is Bacilliredoxin SERP1075 from Staphylococcus epidermidis (strain ATCC 35984 / DSM 28319 / BCRC 17069 / CCUG 31568 / BM 3577 / RP62A).